The following is a 292-amino-acid chain: 4-hydroxy-tetrahydrodipicolinate synthase (292 aa).

Residue Thr-45 coordinates pyruvate. Tyr-134 acts as the Proton donor/acceptor in catalysis. Lys-162 acts as the Schiff-base intermediate with substrate in catalysis. Val-204 provides a ligand contact to pyruvate.

It belongs to the DapA family. As to quaternary structure, homotetramer; dimer of dimers.

The protein localises to the cytoplasm. It catalyses the reaction L-aspartate 4-semialdehyde + pyruvate = (2S,4S)-4-hydroxy-2,3,4,5-tetrahydrodipicolinate + H2O + H(+). Its pathway is amino-acid biosynthesis; L-lysine biosynthesis via DAP pathway; (S)-tetrahydrodipicolinate from L-aspartate: step 3/4. Functionally, catalyzes the condensation of (S)-aspartate-beta-semialdehyde [(S)-ASA] and pyruvate to 4-hydroxy-tetrahydrodipicolinate (HTPA). The chain is 4-hydroxy-tetrahydrodipicolinate synthase from Marinobacter nauticus (strain ATCC 700491 / DSM 11845 / VT8) (Marinobacter aquaeolei).